A 314-amino-acid polypeptide reads, in one-letter code: L-lactate dehydrogenase 2 (314 aa).

Residues Val-16, Asp-37, Lys-42, Tyr-68, and 82–83 (GL) each bind NAD(+). Substrate is bound by residues Gln-85, Arg-91, and 123 to 126 (NPVD). NAD(+)-binding positions include 121–123 (ATN) and Ser-146. 151 to 154 (DSAR) is a substrate binding site. Beta-D-fructose 1,6-bisphosphate is bound by residues Arg-156 and His-171. His-178 functions as the Proton acceptor in the catalytic mechanism. The residue at position 223 (Tyr-223) is a Phosphotyrosine. Thr-232 lines the substrate pocket.

Belongs to the LDH/MDH superfamily. LDH family. In terms of assembly, homotetramer.

It localises to the cytoplasm. The enzyme catalyses (S)-lactate + NAD(+) = pyruvate + NADH + H(+). It participates in fermentation; pyruvate fermentation to lactate; (S)-lactate from pyruvate: step 1/1. Its activity is regulated as follows. Allosterically activated by fructose 1,6-bisphosphate (FBP). Catalyzes the conversion of lactate to pyruvate. The polypeptide is L-lactate dehydrogenase 2 (Bacillus cereus (strain ATCC 10987 / NRS 248)).